A 201-amino-acid chain; its full sequence is Inner membrane protein YnbA (201 aa).

Topologically, residues methionine 1–glycine 43 are periplasmic. Residues leucine 44 to isoleucine 64 traverse the membrane as a helical segment. The Cytoplasmic segment spans residues arginine 65–arginine 84. Residues leucine 85–phenylalanine 107 form a helical membrane-spanning segment. Topologically, residues leucine 108–valine 116 are periplasmic. The helical transmembrane segment at isoleucine 117–valine 139 threads the bilayer. The Cytoplasmic portion of the chain corresponds to arginine 140–arginine 151. A helical transmembrane segment spans residues alanine 152–asparagine 172. The Periplasmic segment spans residues asparagine 173–leucine 175. A helical transmembrane segment spans residues tryptophan 176–leucine 196. Topologically, residues methionine 197 to isoleucine 201 are cytoplasmic.

The protein localises to the cell inner membrane. The polypeptide is Inner membrane protein YnbA (ynbA) (Escherichia coli (strain K12)).